The sequence spans 382 residues: Gap junction alpha-1 protein (382 aa).

The Cytoplasmic segment spans residues 2-23; that stretch reads GGWSALAKLLGKVQAYSPAGGK. A Phosphoserine modification is found at serine 5. Residues 24–44 traverse the membrane as a helical segment; the sequence is VWLSVLFIFRILLLGTAVESA. Topologically, residues 45–76 are extracellular; the sequence is WGDEQSAFRCNTQQPGCENVCYDKSFPISHVR. 2 disulfide bridges follow: cysteine 54–cysteine 192 and cysteine 187–cysteine 198. Residues 77–97 form a helical membrane-spanning segment; sequence FWVLQIIFVSVPTLLYLAHVF. Over 98–155 the chain is Cytoplasmic; the sequence is YVMRKEEKLNKKEEELKVAQTDGANVDMHLKQIEIKKFKYGIEEHGKVKMRGGLLRTY. Lysine 144 participates in a covalent cross-link: Glycyl lysine isopeptide (Lys-Gly) (interchain with G-Cter in SUMO). The helical transmembrane segment at 156 to 176 threads the bilayer; it reads IISILFKSVFEVAFLLIQWYI. Residues 177-207 are Extracellular-facing; sequence YGFSLSAVYTCKREPCPHQVDCFLSRPTEKT. Residues 208–228 form a helical membrane-spanning segment; the sequence is IFIIFMLVVSLVSLALNIIEL. Over 229–382 the chain is Cytoplasmic; the sequence is FYVFFKGVKD…SRPRPDDLEI (154 aa). A Glycyl lysine isopeptide (Lys-Gly) (interchain with G-Cter in SUMO) cross-link involves residue lysine 237. The segment at 244-382 is interaction with NOV; it reads SDPYHATTGP…SRPRPDDLEI (139 aa). Tyrosine 247 is modified (phosphotyrosine). Phosphoserine is present on residues serine 255, serine 257, and serine 262. Positions 264–382 are interaction with UBQLN4; it reads EYAYFNGCSS…SRPRPDDLEI (119 aa). Residue cysteine 271 is modified to S-nitrosocysteine. A Phosphothreonine modification is found at threonine 275. 2 positions are modified to phosphoserine: serine 306 and serine 314. Residues 317-332 are compositionally biased toward polar residues; the sequence is QNRMGQAGSTISNSHA. The segment at 317 to 382 is disordered; sequence QNRMGQAGST…SRPRPDDLEI (66 aa). A Phosphoserine; by CK1 modification is found at serine 325. The residue at position 326 (threonine 326) is a Phosphothreonine. Phosphoserine; by CK1 occurs at positions 328 and 330. Phosphoserine occurs at positions 344 and 365. Positions 362 to 374 are enriched in low complexity; it reads RPSSRASSRASSR. Serine 368 bears the Phosphoserine; by PKC/PRKCG and PKC/PRKCD mark. A phosphoserine mark is found at serine 369 and serine 373.

Belongs to the connexin family. Alpha-type (group II) subfamily. As to quaternary structure, a connexon is composed of a hexamer of connexins. Interacts with SGSM3. Interacts with RIC1/CIP150. Interacts with CNST and CSNK1D. Interacts (via C-terminus) with TJP1. Interacts (via C-terminus) with SRC (via SH3 domain). Interacts (not ubiquitinated) with UBQLN4 (via UBA domain). Interacts with NOV. Interacts with TMEM65. Interacts with ANK3/ANKG and PKP2. Post-translationally, phosphorylation at Ser-325, Ser-328 and Ser-330 by CK1 modulates gap junction assembly. Phosphorylated at Ser-368 by PRKCG; phosphorylation induces disassembly of gap junction plaques and inhibition of gap junction activity. Phosphorylation at Ser-368 by PRKCD triggers its internalization into small vesicles leading to proteasome-mediated degradation. Sumoylated with SUMO1, SUMO2 and SUMO3, which may regulate the level of functional Cx43 gap junctions at the plasma membrane. May be desumoylated by SENP1 or SENP2. In terms of processing, S-nitrosylation at Cys-271 is enriched at the muscle endothelial gap junction in arteries, it augments channel permeability and may regulate of smooth muscle cell to endothelial cell communication. Post-translationally, acetylated in the developing cortex; leading to delocalization from the cell membrane.

Its subcellular location is the cell membrane. The protein localises to the cell junction. The protein resides in the gap junction. It localises to the endoplasmic reticulum. Functionally, gap junction protein that acts as a regulator of bladder capacity. A gap junction consists of a cluster of closely packed pairs of transmembrane channels, the connexons, through which materials of low MW diffuse from one cell to a neighboring cell. May play a critical role in the physiology of hearing by participating in the recycling of potassium to the cochlear endolymph. Negative regulator of bladder functional capacity: acts by enhancing intercellular electrical and chemical transmission, thus sensitizing bladder muscles to cholinergic neural stimuli and causing them to contract. May play a role in cell growth inhibition through the regulation of NOV expression and localization. Plays an essential role in gap junction communication in the ventricles. This is Gap junction alpha-1 protein (GJA1) from Canis lupus familiaris (Dog).